Consider the following 110-residue polypeptide: UPF0122 protein GWCH70_1086 (110 aa).

It belongs to the UPF0122 family.

Functionally, might take part in the signal recognition particle (SRP) pathway. This is inferred from the conservation of its genetic proximity to ftsY/ffh. May be a regulatory protein. The protein is UPF0122 protein GWCH70_1086 of Geobacillus sp. (strain WCH70).